Reading from the N-terminus, the 513-residue chain is Exoglucanase 1 (513 aa).

The first 17 residues, 1 to 17, serve as a signal peptide directing secretion; it reads MYRKLAVISAFLATARA. Glutamine 18 is subject to Pyrrolidone carboxylic acid. The interval 18–453 is catalytic; that stretch reads QSACTLQSET…GSTGNPSGGN (436 aa). Cystine bridges form between cysteine 21-cysteine 89, cysteine 36-cysteine 42, cysteine 67-cysteine 88, cysteine 78-cysteine 84, cysteine 155-cysteine 414, cysteine 189-cysteine 227, cysteine 193-cysteine 226, cysteine 247-cysteine 273, cysteine 255-cysteine 260, and cysteine 278-cysteine 348. Residue asparagine 62 is glycosylated (N-linked (GlcNAc) asparagine). Glutamate 229 acts as the Nucleophile in catalysis. Glutamate 234 (proton donor/acceptor) is an active-site residue. 2 N-linked (GlcNAc) asparagine glycosylation sites follow: asparagine 287 and asparagine 401. Residues 401–437 show a composition bias toward polar residues; the sequence is NETSSTPGAVRGSCSTSSGVPAQVESQSPNAKVTFSN. Residues 401–480 are disordered; that stretch reads NETSSTPGAV…TGSSPGPTQS (80 aa). The segment covering 449-459 has biased composition (gly residues); the sequence is PSGGNPPGGNR. Positions 454–477 are linker; sequence PPGGNRGTTTTRRPATTTGSSPGP. Residues 460–478 are compositionally biased toward low complexity; that stretch reads GTTTTRRPATTTGSSPGPT. O-linked (Man) threonine glycosylation is present at threonine 461. O-linked (Man...) threonine glycosylation is found at threonine 462, threonine 463, and threonine 464. O-linked (Man) threonine glycosylation occurs at threonine 469. 2 O-linked (Man...) threonine glycosylation sites follow: threonine 470 and threonine 471. O-linked (Man) serine glycans are attached at residues serine 473 and serine 474. Residues 477–513 form the CBM1 domain; sequence PTQSHYGQCGGIGYSGPTVCASGTTCQVLNPYYSQCL. An O-linked (Man) threonine glycan is attached at threonine 478. Residues serine 480 and serine 491 are each glycosylated (O-linked (Man) serine). 2 disulfide bridges follow: cysteine 485–cysteine 502 and cysteine 496–cysteine 512.

The protein belongs to the glycosyl hydrolase 7 (cellulase C) family. N-glycosylated. The catalytic core domain comprises three N-linked glycans which each consist of a single N-acetylglucosamine residue. Post-translationally, O-glycosylated. Within the linker domain, all 8 threonines are variably glycosylated with between at least one, and up to three, mannose residues per site. All serines in this domain are at least partially glycosylated with a single mannose residue. O-glycosylation of the cellulase linker provides protection from proteolysis. Linker glycans also contribute to binding affinity of cellobiohydrolases to cellulose.

It localises to the secreted. The catalysed reaction is Hydrolysis of (1-&gt;4)-beta-D-glucosidic linkages in cellulose and cellotetraose, releasing cellobiose from the non-reducing ends of the chains.. In terms of biological role, exocellobiohydrolases (CBH) that catalyzes the hydrolysis of 1,4-beta-D-glucosidic bonds in cellulose to release the disaccharide cellobiose. The degradation of cellulose involves an interplay between different cellulolytic enzymes. Hydrolysis starts with endoglucanases (EGs), which cut internal beta-1,4-glucosidic bonds in cellulose to reduce the polymerization degree of the substrate and create new chain ends for exocellobiohydrolases (CBHs). The CBHs release the disaccharide cellobiose from the non-reducing end of the cellulose polymer chain. Finally, beta-1,4-glucosidases hydrolyze the cellobiose and other short cello-oligosaccharides into glucose units. The sequence is that of Exoglucanase 1 (cbh1) from Hypocrea jecorina (Trichoderma reesei).